We begin with the raw amino-acid sequence, 179 residues long: ATP synthase subunit delta (179 aa).

This sequence belongs to the ATPase delta chain family. As to quaternary structure, F-type ATPases have 2 components, F(1) - the catalytic core - and F(0) - the membrane proton channel. F(1) has five subunits: alpha(3), beta(3), gamma(1), delta(1), epsilon(1). F(0) has three main subunits: a(1), b(2) and c(10-14). The alpha and beta chains form an alternating ring which encloses part of the gamma chain. F(1) is attached to F(0) by a central stalk formed by the gamma and epsilon chains, while a peripheral stalk is formed by the delta and b chains.

The protein resides in the cell inner membrane. Its function is as follows. F(1)F(0) ATP synthase produces ATP from ADP in the presence of a proton or sodium gradient. F-type ATPases consist of two structural domains, F(1) containing the extramembraneous catalytic core and F(0) containing the membrane proton channel, linked together by a central stalk and a peripheral stalk. During catalysis, ATP synthesis in the catalytic domain of F(1) is coupled via a rotary mechanism of the central stalk subunits to proton translocation. This protein is part of the stalk that links CF(0) to CF(1). It either transmits conformational changes from CF(0) to CF(1) or is implicated in proton conduction. The protein is ATP synthase subunit delta of Burkholderia ambifaria (strain ATCC BAA-244 / DSM 16087 / CCUG 44356 / LMG 19182 / AMMD) (Burkholderia cepacia (strain AMMD)).